The following is a 641-amino-acid chain: Protein GAMETE EXPRESSED 3 (641 aa).

The first 29 residues, 1 to 29 (MVAFRFVYIPLPFFFFFFFFFVFFSGVSQ), serve as a signal peptide directing secretion. The helical transmembrane segment at 441–461 (IIWFLLFEFVIMVLFAALVRF) threads the bilayer. The tract at residues 570–627 (ITIFQTPSDESSSEESYRDEHYDDVADDEHDEDDLDRKQKGKLLAHSEGSSNDGDGIA) is disordered. The span at 584-593 (ESYRDEHYDD) shows a compositional bias: basic and acidic residues. A compositionally biased stretch (acidic residues) spans 594–603 (VADDEHDEDD).

Expressed in mature siliques and in pollen, mainly in the sperm cells. Detected in the egg cell within the female gametophyte.

It localises to the cell membrane. Required for micropylar pollen tube guidance. Plays a role during early embryo patterning. The polypeptide is Protein GAMETE EXPRESSED 3 (GEX3) (Arabidopsis thaliana (Mouse-ear cress)).